The primary structure comprises 96 residues: UPF0235 protein Sputw3181_1321 (96 aa).

The protein belongs to the UPF0235 family.

This is UPF0235 protein Sputw3181_1321 from Shewanella sp. (strain W3-18-1).